We begin with the raw amino-acid sequence, 1054 residues long: NACHT, LRR and PYD domains-containing protein 12 (1054 aa).

Positions Met-1 to Val-95 constitute a Pyrin domain. The FISNA domain occupies Tyr-129–Glu-201. Residues His-211–Leu-528 form the NACHT domain. Gly-217–Ser-224 provides a ligand contact to ATP. LRR repeat units follow at residues Tyr-821–Cys-841, Arg-850–Ser-871, Ser-878–Glu-899, Lys-907–Ser-928, Cys-935–Gly-955, Arg-964–Ser-985, Thr-992–Lys-1013, and Lys-1021–Ala-1042.

The protein belongs to the NLRP family. As to quaternary structure, interacts (via pyrin domain) with ASC. Interacts (via pyrin domain) with FAF1 (via UBA domain). Interacts with MAP3K14; this interaction promotes proteasomal degradation of MAP3K14. Interacts with NOD2; this interaction promotes degradation of NOD2 through the ubiquitin-proteasome pathway. Interacts with HSPA1A and HSPA8. Interacts with HSP90AA1. Interacts with TRIM25; this interaction inhibits RIGI-mediated signaling pathway. Mainly expressed in dendritic cells (DCs) and neutrophils.

The protein localises to the cytoplasm. Its function is as follows. Plays an essential role as an potent mitigator of inflammation. Primarily expressed in dendritic cells and macrophages, inhibits both canonical and non-canonical NF-kappa-B and ERK activation pathways. Functions as a negative regulator of NOD2 by targeting it to degradation via the proteasome pathway. In turn, promotes bacterial tolerance. Also inhibits the RIGI-mediated immune signaling against RNA viruses by reducing the E3 ubiquitin ligase TRIM25-mediated 'Lys-63'-linked RIGI activation but enhancing the E3 ubiquitin ligase RNF125-mediated 'Lys-48'-linked RIGI degradation. Also acts as a negative regulator of inflammatory response to mitigate obesity and obesity-associated diseases in adipose tissue. The polypeptide is NACHT, LRR and PYD domains-containing protein 12 (Nlrp12) (Mus musculus (Mouse)).